Here is a 123-residue protein sequence, read N- to C-terminus: Large ribosomal subunit protein bL17 (123 aa).

The protein belongs to the bacterial ribosomal protein bL17 family. Part of the 50S ribosomal subunit. Contacts protein L32.

The polypeptide is Large ribosomal subunit protein bL17 (Borrelia garinii subsp. bavariensis (strain ATCC BAA-2496 / DSM 23469 / PBi) (Borreliella bavariensis)).